Reading from the N-terminus, the 483-residue chain is Putative (R)-citramalate synthase CimA (483 aa).

The Pyruvate carboxyltransferase domain maps to 1–245 (MRDGEQTPGV…DTGIKHEQIY (245 aa)).

It belongs to the alpha-IPM synthase/homocitrate synthase family. As to quaternary structure, homodimer.

It carries out the reaction pyruvate + acetyl-CoA + H2O = (3R)-citramalate + CoA + H(+). Its pathway is amino-acid biosynthesis; L-isoleucine biosynthesis; 2-oxobutanoate from pyruvate: step 1/3. Its function is as follows. Catalyzes the condensation of pyruvate and acetyl-coenzyme A to form (R)-citramalate. The polypeptide is Putative (R)-citramalate synthase CimA (Methanosarcina mazei (strain ATCC BAA-159 / DSM 3647 / Goe1 / Go1 / JCM 11833 / OCM 88) (Methanosarcina frisia)).